The following is a 485-amino-acid chain: Probable trichothecene esterase SAT6 (485 aa).

The segment at 1–23 is disordered; it reads MPQDPNTTLQMSSSKPSLSDLSV. Over residues 9–23 the composition is skewed to low complexity; sequence LQMSSSKPSLSDLSV. Residues S262, D406, and H438 each act as charge relay system in the active site.

The protein belongs to the AB hydrolase superfamily. Lipase family.

It functions in the pathway mycotoxin biosynthesis. In terms of biological role, probable trichothecene esterase; part of the satratoxin SC1 cluster involved in the biosynthesis of satratoxins, trichothecene mycotoxins that are associated with human food poisonings. Satratoxins are suggested to be made by products of multiple gene clusters (SC1, SC2 and SC3) that encode 21 proteins in all, including polyketide synthases, acetyltransferases, and other enzymes expected to modify the trichothecene skeleton. SC1 encodes 10 proteins, SAT1 to SAT10. The largest are SAT8, which encodes a putative polyketide synthase (PKS) with a conventional non-reducing architecture, and SAT10, a putative protein containing four ankyrin repeats and thus may be involved in protein scaffolding. The putative short-chain reductase SAT3 may assist the PKS in some capacity. SAT6 contains a secretory lipase domain and acts probably as a trichothecene esterase. SAT5 encodes a putative acetyltransferase, and so, with SAT6, may affect endogenous protection from toxicity. The probable transcription factor SAT9 may regulate the expression of the SC1 cluster. SC2 encodes proteins SAT11 to SAT16, the largest of which encodes the putative reducing PKS SAT13. SAT11 is a cytochrome P450 monooxygenase, while SAT14 and SAT16 are probable acetyltransferases. The SC2 cluster may be regulated by the transcription factor SAT15. SC3 is a small cluster that encodes 5 proteins, SAT17 to SAT21. SAT21 is a putative MFS-type transporter which may have a role in exporting secondary metabolites. The four other proteins putatively encoded in SC3 include the taurine hydroxylase-like protein SAT17, the O-methyltransferase SAT18, the acetyltransferase SAT19, and the Cys6-type zinc finger SAT20, the latter being probably involved in regulation of SC3 expression. This is Probable trichothecene esterase SAT6 from Stachybotrys chartarum (strain CBS 109288 / IBT 7711) (Toxic black mold).